Here is a 519-residue protein sequence, read N- to C-terminus: MFAQPYDHSFNDLFNQYVNMETSAADGKDSALSDFDQLFPLDSLSSDCGDLPPTVSTPKRHQSPQPWSNDWSLQNDGAAVDHFAFHDTVHPSAISDVNLNNFEVPSRPTATHALSTSPSTPPATPRRKPTQSALITPKSIRHRSPNERRSHLRKQSFSPSLMRSSNLSKSRMAYPEAWAQQIQNFSLHSSEDRLPLSPPPSDVLIQHENMPTEHIMNQPRDSAEMPPQYDARLYHQSPSVSCHRRTSQCQHASNSTTLITKLFHLDSSSPSSADDMFSSSHSSDPHSISSWQSDPLHASSLSFTPDLQGQDSQWWSPMPSRVAQQQASYLESPTPVRTTQNVGNQNDIMQGGLMIQFNPSYDMSADHSFSSSNMLPATPQKFDTSFTTSQIHNVSRSPSLSPKAGTSPRDIHNGSISKPTHRRTHSRKLSGQSMNAPKPAKASGSSSRGSNKSVSVSFVNFTAHDSKKILTGVAPSGSSKTKARREQEARDRRRKLSEAALRAVRSAGGDVEALEAVLC.

Disordered stretches follow at residues proline 105–serine 165, proline 270–aspartate 294, leucine 301–serine 320, glutamine 325–asparagine 344, serine 389–lysine 452, and leucine 470–lysine 495. Positions proline 108–proline 118 are enriched in low complexity. A compositionally biased stretch (polar residues) spans glutamine 155–serine 165. A compositionally biased stretch (polar residues) spans leucine 301–tryptophan 315. The segment covering serine 389–leucine 400 has biased composition (polar residues). A compositionally biased stretch (basic residues) spans proline 419–lysine 428. Positions asparagine 435–lysine 452 are enriched in low complexity.

Belongs to the wetA family.

Its function is as follows. BrlA, abaA and wetA are pivotal regulators of conidiophore development and conidium maturation. They act individually and together to regulate their own expression and that of numerous other sporulation-specific genes. The sequence is that of Developmental regulatory protein wetA from Penicillium camembertii.